The following is a 470-amino-acid chain: MISRIPRLLFENILVPVADVLTKSVSNFAGHKSDQSYNSNATRVSTISDEEIEFYLNLKSAVLLLCLALCIAGFSVLMYFLYVLVFVPYNRVKRLGSIGYQNHEEGHLSKKDIANLVRRRRKVGDDLPPVFPNGWFRLVDSQQLEPGQVKQVTALGEHFAVFRSKSGKASILDAYCPHMGGNLAVGGIVKNDCLECPFHGWRFDGDGKCVAIPYSEKIPTFAKTKSWPCREVNKAIFVWFHCDGKEPEWEIPDISEISTGKFTYKGRVEHHANTHIQDVPENGSDLAHLSHLHVPHAMSGANLSTQYSSWWNFAEHIFKAQCIGPADGEPHISLFYLTHYLHVFKRFKLLSLNLNVYQIGPGIVHLHFDSPFGKGVFVQTLTPVEPLHLVLTHNLHASWSIPVWLGRIFLYLEAIQVDRDVMIWNNKTFEPRPKLLKEDSLIAKYRRWYSQFYTENSPRLTLKSEDGNGW.

A helical transmembrane segment spans residues 67-87 (LALCIAGFSVLMYFLYVLVFV). The Rieske domain occupies 136–238 (FRLVDSQQLE…CREVNKAIFV (103 aa)). [2Fe-2S] cluster-binding residues include C176, H178, C196, and H199.

Belongs to the cholesterol 7-desaturase family. [2Fe-2S] cluster is required as a cofactor.

The protein localises to the membrane. It carries out the reaction cholesterol + NADPH + O2 + H(+) = 7-dehydrocholesterol + NADP(+) + 2 H2O. The catalysed reaction is cholesterol + NADH + O2 + H(+) = 7-dehydrocholesterol + NAD(+) + 2 H2O. It participates in steroid hormone biosynthesis; dafachronic acid biosynthesis. Catalyzes the production of 7-dehydrocholesterol (7-DHC or cholesta-5,7-dien-3beta-ol) by inserting a double bond (desaturating) at the C7-C8 single bond of cholesterol. Essential regulator of steroid biosynthesis as this reaction is the first step in the synthesis of the steroid hormone Delta(7)-dafachronic acid. The polypeptide is Cholesterol 7-desaturase nvd 1 (Ciona intestinalis (Transparent sea squirt)).